Consider the following 123-residue polypeptide: WAP four-disulfide core domain protein 5 (123 aa).

Residues 1–24 (MRFGRLLLLAVLLAGVSQLPAVSG) form the signal peptide. 2 consecutive WAP domains span residues 27-74 (KGEK…IPRV) and 75-121 (SVKL…RDPV). Disulfide bonds link Cys34-Cys62, Cys41-Cys66, Cys49-Cys61, Cys55-Cys70, Cys81-Cys109, Cys88-Cys113, Cys96-Cys108, and Cys102-Cys117.

Its subcellular location is the secreted. Putative acid-stable proteinase inhibitor. This Otolemur garnettii (Small-eared galago) protein is WAP four-disulfide core domain protein 5 (WFDC5).